A 29-amino-acid polypeptide reads, in one-letter code: Brevinin-2Rd (29 aa).

The cysteines at positions 23 and 29 are disulfide-linked.

In terms of tissue distribution, expressed by the skin glands.

The protein resides in the secreted. Functionally, antimicrobial peptide. The polypeptide is Brevinin-2Rd (Pelophylax ridibundus (Marsh frog)).